The sequence spans 197 residues: dTTP/UTP pyrophosphatase (197 aa).

Residue D70 is the Proton acceptor of the active site.

It belongs to the Maf family. YhdE subfamily. A divalent metal cation is required as a cofactor.

It localises to the cytoplasm. The enzyme catalyses dTTP + H2O = dTMP + diphosphate + H(+). It carries out the reaction UTP + H2O = UMP + diphosphate + H(+). Functionally, nucleoside triphosphate pyrophosphatase that hydrolyzes dTTP and UTP. May have a dual role in cell division arrest and in preventing the incorporation of modified nucleotides into cellular nucleic acids. The polypeptide is dTTP/UTP pyrophosphatase (yhdE) (Escherichia coli O157:H7).